Consider the following 112-residue polypeptide: Putative pterin-4-alpha-carbinolamine dehydratase (112 aa).

The protein belongs to the pterin-4-alpha-carbinolamine dehydratase family.

It carries out the reaction (4aS,6R)-4a-hydroxy-L-erythro-5,6,7,8-tetrahydrobiopterin = (6R)-L-erythro-6,7-dihydrobiopterin + H2O. In Shewanella frigidimarina (strain NCIMB 400), this protein is Putative pterin-4-alpha-carbinolamine dehydratase.